The sequence spans 535 residues: T-complex protein 1 subunit zeta (535 aa).

Belongs to the TCP-1 chaperonin family. Heterooligomeric complex of about 850 to 900 kDa that forms two stacked rings, 12 to 16 nm in diameter.

It localises to the cytoplasm. Functionally, molecular chaperone; assists the folding of proteins upon ATP hydrolysis. Known to play a role, in vitro, in the folding of actin and tubulin. The chain is T-complex protein 1 subunit zeta (cct6) from Schizosaccharomyces pombe (strain 972 / ATCC 24843) (Fission yeast).